The primary structure comprises 359 residues: Phospho-N-acetylmuramoyl-pentapeptide-transferase (359 aa).

The next 10 helical transmembrane spans lie at 3–23 (QILI…PALI), 55–75 (VAII…GLAF), 80–100 (ISAS…VGFL), 117–137 (TAKT…ALGF), 156–176 (IATV…VVSA), 187–207 (LDGL…LITF), 231–251 (LAIV…WNAA), 255–275 (IFMG…ISVT), 280–300 (ILAV…VLQI), and 334–354 (FWLL…GEWL).

The protein belongs to the glycosyltransferase 4 family. MraY subfamily. The cofactor is Mg(2+).

It is found in the cell membrane. It carries out the reaction UDP-N-acetyl-alpha-D-muramoyl-L-alanyl-gamma-D-glutamyl-meso-2,6-diaminopimeloyl-D-alanyl-D-alanine + di-trans,octa-cis-undecaprenyl phosphate = di-trans,octa-cis-undecaprenyl diphospho-N-acetyl-alpha-D-muramoyl-L-alanyl-D-glutamyl-meso-2,6-diaminopimeloyl-D-alanyl-D-alanine + UMP. Its pathway is cell wall biogenesis; peptidoglycan biosynthesis. Catalyzes the initial step of the lipid cycle reactions in the biosynthesis of the cell wall peptidoglycan: transfers peptidoglycan precursor phospho-MurNAc-pentapeptide from UDP-MurNAc-pentapeptide onto the lipid carrier undecaprenyl phosphate, yielding undecaprenyl-pyrophosphoryl-MurNAc-pentapeptide, known as lipid I. The chain is Phospho-N-acetylmuramoyl-pentapeptide-transferase from Mycobacterium avium (strain 104).